Consider the following 154-residue polypeptide: Ribosomal RNA large subunit methyltransferase H (154 aa).

S-adenosyl-L-methionine contacts are provided by residues Leu-70, Gly-102, and 121–126 (LSRMTL).

It belongs to the RNA methyltransferase RlmH family. In terms of assembly, homodimer.

It is found in the cytoplasm. It carries out the reaction pseudouridine(1915) in 23S rRNA + S-adenosyl-L-methionine = N(3)-methylpseudouridine(1915) in 23S rRNA + S-adenosyl-L-homocysteine + H(+). Specifically methylates the pseudouridine at position 1915 (m3Psi1915) in 23S rRNA. The polypeptide is Ribosomal RNA large subunit methyltransferase H (Geobacter sp. (strain M21)).